The following is a 114-amino-acid chain: Large ribosomal subunit protein bL19 (114 aa).

The protein belongs to the bacterial ribosomal protein bL19 family.

In terms of biological role, this protein is located at the 30S-50S ribosomal subunit interface and may play a role in the structure and function of the aminoacyl-tRNA binding site. This Bacillus cereus (strain AH187) protein is Large ribosomal subunit protein bL19.